A 206-amino-acid chain; its full sequence is Ribosomal RNA small subunit methyltransferase G (206 aa).

Residues Gly-74, Leu-79, 125 to 126 (VE), and Arg-140 contribute to the S-adenosyl-L-methionine site.

The protein belongs to the methyltransferase superfamily. RNA methyltransferase RsmG family.

The protein localises to the cytoplasm. It carries out the reaction guanosine(527) in 16S rRNA + S-adenosyl-L-methionine = N(7)-methylguanosine(527) in 16S rRNA + S-adenosyl-L-homocysteine. Specifically methylates the N7 position of guanine in position 527 of 16S rRNA. The chain is Ribosomal RNA small subunit methyltransferase G from Shewanella frigidimarina (strain NCIMB 400).